Reading from the N-terminus, the 366-residue chain is Histidinol-phosphate aminotransferase (366 aa).

N6-(pyridoxal phosphate)lysine is present on Lys231.

This sequence belongs to the class-II pyridoxal-phosphate-dependent aminotransferase family. Histidinol-phosphate aminotransferase subfamily. It depends on pyridoxal 5'-phosphate as a cofactor.

The catalysed reaction is L-histidinol phosphate + 2-oxoglutarate = 3-(imidazol-4-yl)-2-oxopropyl phosphate + L-glutamate. Its pathway is amino-acid biosynthesis; L-histidine biosynthesis; L-histidine from 5-phospho-alpha-D-ribose 1-diphosphate: step 7/9. The polypeptide is Histidinol-phosphate aminotransferase (Halobacterium salinarum (strain ATCC 29341 / DSM 671 / R1)).